Here is a 300-residue protein sequence, read N- to C-terminus: Haloalkane dehalogenase (300 aa).

An AB hydrolase-1 domain is found at 32-155 (AIVFQHGNPT…PAVRGVFQGF (124 aa)). Asp-109 serves as the catalytic Nucleophile. Glu-133 acts as the Proton donor in catalysis. His-273 acts as the Proton acceptor in catalysis.

Belongs to the haloalkane dehalogenase family. Type 2 subfamily. In terms of assembly, monomer.

It carries out the reaction 1-haloalkane + H2O = a halide anion + a primary alcohol + H(+). Catalyzes hydrolytic cleavage of carbon-halogen bonds in halogenated aliphatic compounds, leading to the formation of the corresponding primary alcohols, halide ions and protons. This Mycobacterium bovis (strain BCG / Pasteur 1173P2) protein is Haloalkane dehalogenase.